A 63-amino-acid polypeptide reads, in one-letter code: Large ribosomal subunit protein uL29 (63 aa).

This sequence belongs to the universal ribosomal protein uL29 family.

This chain is Large ribosomal subunit protein uL29, found in Aliivibrio fischeri (strain ATCC 700601 / ES114) (Vibrio fischeri).